The following is a 192-amino-acid chain: Small ribosomal subunit protein uS5 (192 aa).

The tract at residues 1-21 is disordered; sequence MAAERERGGRERGGRDRDERD. The 64-residue stretch at 24–87 folds into the S5 DRBM domain; sequence FVDKLVHINR…DSAKRNLTRV (64 aa).

It belongs to the universal ribosomal protein uS5 family. In terms of assembly, part of the 30S ribosomal subunit. Contacts proteins S4 and S8.

Functionally, with S4 and S12 plays an important role in translational accuracy. Its function is as follows. Located at the back of the 30S subunit body where it stabilizes the conformation of the head with respect to the body. The protein is Small ribosomal subunit protein uS5 of Afipia carboxidovorans (strain ATCC 49405 / DSM 1227 / KCTC 32145 / OM5) (Oligotropha carboxidovorans).